Reading from the N-terminus, the 223-residue chain is MKRTKSIRHASFRKNWSARHLTPVALAVATVFMLAGCEKSDETVSLYQNADDCSAANPGKSAECTTAYNNALKEAERTAPKYATREDCVAEFGEGQCQQAPAQAGMAPENQAQAQQSSGSFWMPLMAGYMMGRLMGGGAGFAQQPLFSSKNPASPAYGKYTDATGKNYGAAQPGRTMTVPKTAMAPKPATTTTVTRGGFGESVAKQSTMQRGATGTSSRSMGG.

Positions 178–195 (TVPKTAMAPKPATTTTVT) are enriched in low complexity. Residues 178–223 (TVPKTAMAPKPATTTTVTRGGFGESVAKQSTMQRGATGTSSRSMGG) form a disordered region. Positions 204–223 (AKQSTMQRGATGTSSRSMGG) are enriched in polar residues.

It belongs to the UPF0441 family.

In Escherichia coli O6:K15:H31 (strain 536 / UPEC), this protein is UPF0441 protein YgiB.